Consider the following 284-residue polypeptide: tRNA pseudouridine synthase A (284 aa).

Asp52 acts as the Nucleophile in catalysis. Tyr149 lines the substrate pocket.

Belongs to the tRNA pseudouridine synthase TruA family. Homodimer.

It carries out the reaction uridine(38/39/40) in tRNA = pseudouridine(38/39/40) in tRNA. In terms of biological role, formation of pseudouridine at positions 38, 39 and 40 in the anticodon stem and loop of transfer RNAs. The sequence is that of tRNA pseudouridine synthase A from Orientia tsutsugamushi (strain Boryong) (Rickettsia tsutsugamushi).